A 471-amino-acid polypeptide reads, in one-letter code: GDP-mannose transporter (471 aa).

Residues methionine 1 to glutamate 13 show a composition bias toward polar residues. A disordered region spans residues methionine 1 to arginine 52. Over methionine 1–alanine 70 the chain is Cytoplasmic. A helical membrane pass occupies residues valine 71 to valine 91. Over valine 92–glycine 101 the chain is Lumenal. Residues phenylalanine 102 to isoleucine 122 form a helical membrane-spanning segment. Residues alanine 123–alanine 139 are Cytoplasmic-facing. The chain crosses the membrane as a helical span at residues tryptophan 140–leucine 160. At glutamine 161–serine 166 the chain is on the lumenal side. Asparagine 164 carries N-linked (GlcNAc...) asparagine glycosylation. A helical transmembrane segment spans residues valine 167–phenylalanine 187. The Cytoplasmic portion of the chain corresponds to glycine 188–arginine 193. The chain crosses the membrane as a helical span at residues isoleucine 194–isoleucine 214. Over serine 215–glycine 279 the chain is Lumenal. N-linked (GlcNAc...) asparagine glycosylation is present at asparagine 222. A helical membrane pass occupies residues leucine 280 to leucine 300. Residues leucine 301–aspartate 315 lie on the Cytoplasmic side of the membrane. Residues threonine 316–glutamate 336 form a helical membrane-spanning segment. The Lumenal segment spans residues aspartate 337–lysine 354. A helical membrane pass occupies residues leucine 355–tryptophan 375. The Cytoplasmic portion of the chain corresponds to cysteine 376–threonine 383. A helical membrane pass occupies residues threonine 384–phenylalanine 404. Residues histidine 405–proline 408 lie on the Lumenal side of the membrane. The helical transmembrane segment at valine 409–phenylalanine 429 threads the bilayer. The Cytoplasmic segment spans residues glycine 430–aspartate 471. A compositionally biased stretch (low complexity) spans glycine 442–serine 460. Positions glycine 442–aspartate 471 are disordered.

The protein belongs to the TPT transporter family. SLC35D subfamily. In terms of assembly, homooligomer.

The protein resides in the golgi apparatus membrane. It localises to the cytoplasmic vesicle membrane. It is found in the endoplasmic reticulum membrane. Involved in the import of GDP-mannose from the cytoplasm into the Golgi lumen. This Mycosarcoma maydis (Corn smut fungus) protein is GDP-mannose transporter (VRG4).